We begin with the raw amino-acid sequence, 173 residues long: Bifunctional protein PyrR (173 aa).

A PRPP-binding motif is present at residues 93–105; it reads VILVDDVLYTGRT.

This sequence belongs to the purine/pyrimidine phosphoribosyltransferase family. PyrR subfamily. In terms of assembly, homodimer and homohexamer; in equilibrium.

It carries out the reaction UMP + diphosphate = 5-phospho-alpha-D-ribose 1-diphosphate + uracil. Regulates transcriptional attenuation of the pyrimidine nucleotide (pyr) operon by binding in a uridine-dependent manner to specific sites on pyr mRNA. This disrupts an antiterminator hairpin in the RNA and favors formation of a downstream transcription terminator, leading to a reduced expression of downstream genes. Functionally, also displays a weak uracil phosphoribosyltransferase activity which is not physiologically significant. The protein is Bifunctional protein PyrR of Streptococcus thermophilus (strain CNRZ 1066).